Here is a 535-residue protein sequence, read N- to C-terminus: CTP synthase (535 aa).

Residues 1-267 are amidoligase domain; sequence MTKYIFVTGG…DQIVCDHLKL (267 aa). Ser-13 contacts CTP. A UTP-binding site is contributed by Ser-13. 14-19 contributes to the ATP binding site; sequence SLGKGI. Residue Tyr-54 coordinates L-glutamine. Residue Asp-71 participates in ATP binding. Positions 71 and 141 each coordinate Mg(2+). CTP contacts are provided by residues 148-150, 188-193, and Lys-224; these read DIE and KTKPTQ. Residues 188 to 193 and Lys-224 each bind UTP; that span reads KTKPTQ. Residue 240-242 coordinates ATP; it reads RDA. A Glutamine amidotransferase type-1 domain is found at 292 to 534; sequence KIALVGKYVE…VKASITNKES (243 aa). Gly-354 lines the L-glutamine pocket. Catalysis depends on Cys-381, which acts as the Nucleophile; for glutamine hydrolysis. L-glutamine is bound by residues 382–385, Glu-405, and Arg-462; that span reads LGMQ. Residues His-507 and Glu-509 contribute to the active site.

The protein belongs to the CTP synthase family. In terms of assembly, homotetramer.

The catalysed reaction is UTP + L-glutamine + ATP + H2O = CTP + L-glutamate + ADP + phosphate + 2 H(+). It carries out the reaction L-glutamine + H2O = L-glutamate + NH4(+). The enzyme catalyses UTP + NH4(+) + ATP = CTP + ADP + phosphate + 2 H(+). The protein operates within pyrimidine metabolism; CTP biosynthesis via de novo pathway; CTP from UDP: step 2/2. Its activity is regulated as follows. Allosterically activated by GTP, when glutamine is the substrate; GTP has no effect on the reaction when ammonia is the substrate. The allosteric effector GTP functions by stabilizing the protein conformation that binds the tetrahedral intermediate(s) formed during glutamine hydrolysis. Inhibited by the product CTP, via allosteric rather than competitive inhibition. Catalyzes the ATP-dependent amination of UTP to CTP with either L-glutamine or ammonia as the source of nitrogen. Regulates intracellular CTP levels through interactions with the four ribonucleotide triphosphates. This is CTP synthase from Bacillus thuringiensis subsp. konkukian (strain 97-27).